A 606-amino-acid polypeptide reads, in one-letter code: Aspartate--tRNA(Asp/Asn) ligase (606 aa).

E187 provides a ligand contact to L-aspartate. Residues Q211–K214 form an aspartate region. R233 and H461 together coordinate L-aspartate. ATP is bound at residue R233–E235. Residue E495 participates in ATP binding. Residue R502 participates in L-aspartate binding. Residue G547–R550 participates in ATP binding.

The protein belongs to the class-II aminoacyl-tRNA synthetase family. Type 1 subfamily. As to quaternary structure, homodimer.

It localises to the cytoplasm. The catalysed reaction is tRNA(Asx) + L-aspartate + ATP = L-aspartyl-tRNA(Asx) + AMP + diphosphate. Aspartyl-tRNA synthetase with relaxed tRNA specificity since it is able to aspartylate not only its cognate tRNA(Asp) but also tRNA(Asn). Reaction proceeds in two steps: L-aspartate is first activated by ATP to form Asp-AMP and then transferred to the acceptor end of tRNA(Asp/Asn). The protein is Aspartate--tRNA(Asp/Asn) ligase of Chlorobium phaeobacteroides (strain DSM 266 / SMG 266 / 2430).